Consider the following 522-residue polypeptide: Sorting nexin-1 (522 aa).

The tract at residues 1-144 is disordered; sequence MASGGGGCSA…EEEEQEDQFD (144 aa). Residues Ser32 and Ser39 each carry the phosphoserine modification. Positions 35–45 are enriched in acidic residues; it reads EAGDSDTEGED. Thr41 and Thr48 each carry phosphothreonine. The segment covering 55–65 has biased composition (polar residues); it reads KPQSPKKTTSL. Phosphoserine occurs at positions 58 and 72. Residues 71–80 are compositionally biased toward basic and acidic residues; the sequence is GSKENGIHED. A compositionally biased stretch (polar residues) spans 98-125; it reads LDSTQNNQKTMPGKTLTSHSPQEATNSP. Positions 132 to 143 are enriched in acidic residues; the sequence is EELEEEEQEDQF. The 130-residue stretch at 143 to 272 folds into the PX domain; that stretch reads FDLTVGITDP…EFLEKEELPR (130 aa). Residues Arg186, Ser188, and Lys214 each coordinate a 1,2-diacyl-sn-glycero-3-phospho-(1D-myo-inositol-3-phosphate). Ser188 is subject to Phosphoserine. Lys237 is modified (N6-acetyllysine). Arg238 serves as a coordination point for a 1,2-diacyl-sn-glycero-3-phospho-(1D-myo-inositol-3-phosphate). Phosphoserine is present on Ser280. Positions 281–298 are membrane-binding amphipathic helix; sequence GAGLLKMFNKATDAVSKM. The 221-residue stretch at 302–522 folds into the BAR domain; the sequence is MNESDIWFEE…AFLPEAKAIS (221 aa).

Belongs to the sorting nexin family. In terms of assembly, predominantly forms heterodimers with BAR domain-containing sorting nexins SNX5, SNX6 and SNX32. Can self-associate to form homodimers. The heterodimers are proposed to self-assemble into helical arrays on the membrane to stabilize and expand local membrane curvature underlying endosomal tubule formation. Thought to be a component of the originally described retromer complex (also called SNX-BAR retromer) which is a pentamer containing the heterotrimeric retromer cargo-selective complex (CSC), also described as vacuolar protein sorting subcomplex (VPS) and a heterodimeric membrane-deforming subcomplex formed between SNX1 or SNX2 and SNX5 or SNX6 (also called SNX-BAR subcomplex); the respective CSC and SNX-BAR subcomplexes associate with low affinity. Interacts with SNX5, SNX6, SNX32, VPS26A, VPS29, VPS35, DRD5, DENND5A, KALRN, RHOG (GDP-bound form). The interaction with SNX2 is reported controversially. Interacts with DNAJC13; prevented by presence of HGS. Interacts with HGS.

The protein resides in the endosome membrane. Its subcellular location is the golgi apparatus. It is found in the trans-Golgi network membrane. It localises to the early endosome membrane. The protein localises to the cell projection. The protein resides in the lamellipodium. Its function is as follows. Involved in several stages of intracellular trafficking. Interacts with membranes containing phosphatidylinositol 3-phosphate (PtdIns(3P)) or phosphatidylinositol 3,5-bisphosphate (PtdIns(3,5)P2). Acts in part as component of the retromer membrane-deforming SNX-BAR subcomplex. The SNX-BAR retromer mediates retrograde transport of cargo proteins from endosomes to the trans-Golgi network (TGN) and is involved in endosome-to-plasma membrane transport for cargo protein recycling. The SNX-BAR subcomplex functions to deform the donor membrane into a tubular profile called endosome-to-TGN transport carrier (ETC). Can sense membrane curvature and has in vitro vesicle-to-membrane remodeling activity. Involved in retrograde endosome-to-TGN transport of lysosomal enzyme receptors (IGF2R, M6PR and SORT1). Plays a role in targeting ligand-activated EGFR to the lysosomes for degradation after endocytosis from the cell surface and release from the Golgi. Involvement in retromer-independent endocytic trafficking of P2RY1 and lysosomal degradation of protease-activated receptor-1/F2R. Promotes KALRN- and RHOG-dependent but retromer-independent membrane remodeling such as lamellipodium formation; the function is dependent on GEF activity of KALRN. Required for endocytosis of DRD5 upon agonist stimulation but not for basal receptor trafficking. This Mus musculus (Mouse) protein is Sorting nexin-1 (Snx1).